The primary structure comprises 111 residues: MNAHKERLESNLLELLQEALASLNDSELNSLSVTKVECSKGKHHAYVFVLSSDHKILSKLKKAEGLIRQFVLQASGWFKCPKLSFVSDNSLEKQLRLDAIFNEIAKGKDND.

Belongs to the RbfA family. Monomer. Binds 30S ribosomal subunits, but not 50S ribosomal subunits or 70S ribosomes.

The protein resides in the cytoplasm. Functionally, one of several proteins that assist in the late maturation steps of the functional core of the 30S ribosomal subunit. Associates with free 30S ribosomal subunits (but not with 30S subunits that are part of 70S ribosomes or polysomes). Required for efficient processing of 16S rRNA. May interact with the 5'-terminal helix region of 16S rRNA. The chain is Ribosome-binding factor A from Helicobacter pylori (strain ATCC 700392 / 26695) (Campylobacter pylori).